The chain runs to 672 residues: Spermatid perinuclear RNA-binding protein (672 aa).

A DZF domain is found at 5-363; it reads RSFANDDRHV…ALKRPFEDGL (359 aa). Disordered regions lie at residues 52-73 and 349-371; these read TNKGTKTEGETEVKKDEAGENY and GAGSSALKRPFEDGLGDDKDPNK. The span at 357 to 371 shows a compositional bias: basic and acidic residues; that stretch reads RPFEDGLGDDKDPNK. The DRBM 1 domain maps to 387–453; that stretch reads DLMNALMRLN…AVKVLQAMGY (67 aa). Over residues 466–476 the composition is skewed to basic and acidic residues; sequence SDEKSDNESKN. Positions 466–499 are disordered; that stretch reads SDEKSDNESKNETVSSNSSNNTGNSTTETSSTLE. Low complexity predominate over residues 477–497; it reads ETVSSNSSNNTGNSTTETSST. The DRBM 2 domain maps to 510-576; that stretch reads SGKNPVMELN…ALAALEKLFS (67 aa). Residues Arg-612 and Arg-617 each carry the asymmetric dimethylarginine modification.

Interacts with EIF2AK2. Associates with microtubules; it is unsure whether such interaction is direct or indirect.

It is found in the cytoplasm. Functionally, involved in spermatogenesis and sperm function. Plays a role in regulation of cell growth. Binds to double-stranded DNA and RNA. Binds most efficiently to poly(I:C) RNA than to poly(dI:dC) DNA. Binds also to single-stranded poly(G) RNA. Binds non-specifically to the mRNA PRM1 3'-UTR and adenovirus VA RNA. In Pongo abelii (Sumatran orangutan), this protein is Spermatid perinuclear RNA-binding protein (STRBP).